A 194-amino-acid chain; its full sequence is UPF0232 protein MSMEG_0004/MSMEI_0006 (194 aa).

Residues Met1–Ala14 show a composition bias toward acidic residues. Positions Met1 to Gln81 are disordered. The segment covering Asp30–Arg52 has biased composition (basic and acidic residues).

It belongs to the UPF0232 family.

The sequence is that of UPF0232 protein MSMEG_0004/MSMEI_0006 from Mycolicibacterium smegmatis (strain ATCC 700084 / mc(2)155) (Mycobacterium smegmatis).